A 250-amino-acid polypeptide reads, in one-letter code: Testis-expressed protein 101 (250 aa).

An N-terminal signal peptide occupies residues 1–25; it reads MGACRIQYILLVFLLIASHWTLVQN. 4 N-linked (GlcNAc...) asparagine glycosylation sites follow: Asn45, Asn110, Asn134, and Asn160. The UPAR/Ly6 domain occupies 141 to 215; sequence CPTCLALEPC…VKETCSYQSF (75 aa). Gly224 carries GPI-anchor amidated glycine lipidation. The propeptide at 225-250 is removed in mature form; sequence ASWMPTSLWVLELLLPALSLPLIYFP.

In terms of assembly, interacts with VAMP3. Interacts with LY6K. Interacts with DPEP3; co-localized on the cell surface of spermatocytes, spermatids, and testicular spermatozoa, co-localized only in cytoplasmic droplets of caput and corpus epididymal sperm. Interacts with ADAM5. N-glycosylated; by high mannose and/or biantennary complex and/or certain types of hybrid oligosaccharides; possesses different oligosaccharides chains according to its subcellular localization in the testis. Post-translationally, sheds from membrane raft by ACE and released from the cell surface of epididymal sperm while it passes through the caput epididymis leading to disappearance of TEX101 on spermatozoa; is essential to produce fertile spermatozoa. Detected in testis.

The protein localises to the cell membrane. It localises to the membrane raft. The protein resides in the cytoplasmic vesicle. Its subcellular location is the secretory vesicle. It is found in the acrosome. The protein localises to the secreted. Functionally, plays a role in fertilization by controlling binding of sperm to zona pellucida and migration of spermatozoa into the oviduct. May play a role in signal transduction and promote protein tyrosine phosphorylation. In Rattus norvegicus (Rat), this protein is Testis-expressed protein 101.